The following is a 751-amino-acid chain: Glutathione biosynthesis bifunctional protein GshAB (751 aa).

Residues 1–336 (MELDAVGKAI…QADQLTRQVL (336 aa)) form a glutamate--cysteine ligase region.

It in the N-terminal section; belongs to the glutamate--cysteine ligase type 1 family. Type 2 subfamily. As to quaternary structure, monomer.

The enzyme catalyses L-cysteine + L-glutamate + ATP = gamma-L-glutamyl-L-cysteine + ADP + phosphate + H(+). The catalysed reaction is gamma-L-glutamyl-L-cysteine + glycine + ATP = glutathione + ADP + phosphate + H(+). The protein operates within sulfur metabolism; glutathione biosynthesis; glutathione from L-cysteine and L-glutamate: step 1/2. It functions in the pathway sulfur metabolism; glutathione biosynthesis; glutathione from L-cysteine and L-glutamate: step 2/2. Functionally, synthesizes glutathione from L-glutamate and L-cysteine via gamma-L-glutamyl-L-cysteine. The protein is Glutathione biosynthesis bifunctional protein GshAB (gshAB) of Lactiplantibacillus plantarum (strain ATCC BAA-793 / NCIMB 8826 / WCFS1) (Lactobacillus plantarum).